We begin with the raw amino-acid sequence, 1307 residues long: tRNA(adenine(34)) deaminase, chloroplastic (1307 aa).

A chloroplast-targeting transit peptide spans 1–55 (MFNTYTNSLQWPIRSRNQQDYCSLLPERSESYKLSKAYTSSRCYCVSSRSSCCCC). Disordered stretches follow at residues 245–377 (EYIG…ESTG), 439–458 (SSED…SSQE), 544–563 (HNPL…SHTS), 576–618 (EKRL…GQTT), 753–807 (GVIN…ATEG), 837–957 (SRAG…EEGG), and 975–1073 (LPSR…SVSA). The span at 267 to 278 (SSCSSYYSLASS) shows a compositional bias: low complexity. Residues 280 to 309 (EFESDTEDQEEDVEIYRENVRSSEKKVVDQ) are a coiled coil. Residues 281 to 292 (FESDTEDQEEDV) show a composition bias toward acidic residues. Over residues 293-321 (EIYRENVRSSEKKVVDQSAKRLKSRKEAS) the composition is skewed to basic and acidic residues. Positions 367 to 377 (QTENRVSESTG) are enriched in polar residues. Basic and acidic residues predominate over residues 439–448 (SSEDRVSEMR). Composition is skewed to polar residues over residues 546-563 (PLQT…SHTS) and 582-591 (QGSTTAVQSD). Composition is skewed to basic and acidic residues over residues 592 to 615 (SKVE…KKDG) and 760 to 771 (EEQRAESNQLKR). Polar residues predominate over residues 852–863 (SSPNESVSSATW). Residues 866–883 (GREHDGSSDDNTKGDKVL) show a composition bias toward basic and acidic residues. 3 stretches are compositionally biased toward polar residues: residues 895–907 (VGQT…SEYP), 924–947 (SSPS…SGNQ), and 1045–1073 (SGSS…SVSA). A CMP/dCMP-type deaminase domain is found at 1108–1230 (TVDEIFMREA…RLFPGGEGNG (123 aa)). Residue His-1159 participates in Zn(2+) binding. The Proton donor role is filled by Glu-1161. 2 residues coordinate Zn(2+): Cys-1189 and Cys-1192. A disordered region spans residues 1268–1293 (QLRRKKKDKNSDPPTPTDHHHHHLPK).

It belongs to the cytidine and deoxycytidylate deaminase family. Homodimer. Zn(2+) is required as a cofactor.

It is found in the plastid. The protein localises to the chloroplast. It carries out the reaction adenosine(34) in tRNA + H2O + H(+) = inosine(34) in tRNA + NH4(+). In terms of biological role, deaminates adenosines to inosines in tRNA-Arg(ACG). Exclusively involved in A-to-I editing of the prokaryote-type chloroplast-tRNA and not involved in C-to-U editing. The chain is tRNA(adenine(34)) deaminase, chloroplastic (TADA) from Arabidopsis thaliana (Mouse-ear cress).